The following is a 723-amino-acid chain: Polyribonucleotide nucleotidyltransferase (723 aa).

Mg(2+)-binding residues include D488 and D494. In terms of domain architecture, KH spans 555–614 (PRMITMKIHPDKIREVIGKGGSTIQALTKETGTTIDIQEDGTITIASTSTDGMAEAKRRI). An S1 motif domain is found at 624–692 (GKIYAGTVLK…EKGRLRLSLK (69 aa)). The segment at 701-723 (SISPINAGEAAAPAAPAEGSEQQ) is disordered. Low complexity predominate over residues 707–723 (AGEAAAPAAPAEGSEQQ).

This sequence belongs to the polyribonucleotide nucleotidyltransferase family. Mg(2+) serves as cofactor.

It is found in the cytoplasm. It catalyses the reaction RNA(n+1) + phosphate = RNA(n) + a ribonucleoside 5'-diphosphate. Involved in mRNA degradation. Catalyzes the phosphorolysis of single-stranded polyribonucleotides processively in the 3'- to 5'-direction. The polypeptide is Polyribonucleotide nucleotidyltransferase (Cupriavidus necator (strain ATCC 17699 / DSM 428 / KCTC 22496 / NCIMB 10442 / H16 / Stanier 337) (Ralstonia eutropha)).